The sequence spans 201 residues: Syndecan-2 (201 aa).

The N-terminal stretch at 1–18 (MQRAWILLTLGLMACVSA) is a signal peptide. At 19-144 (ETRAELTSDK…HSDNLFKRTE (126 aa)) the chain is on the extracellular side. O-linked (Xyl...) (glycosaminoglycan) serine glycosylation is found at Ser-41, Ser-55, and Ser-57. Disordered regions lie at residues 42-69 (GLYPIDDDDYSSASGSGAYEDKGSPDLT) and 88-129 (TMTL…KSTD). A compositionally biased stretch (polar residues) spans 90 to 102 (TLKTQSITPTQTE). Basic and acidic residues predominate over residues 106–123 (ETDKKEFEISEAEEKQDP). Ser-115 bears the Phosphoserine mark. The chain crosses the membrane as a helical span at residues 145–169 (VLAAVIAGGVIGFLFAIFLILLLVY). Topologically, residues 170–201 (RMRKKDEGSYDLGERKPSSAAYQKAPTKEFYA) are cytoplasmic. Residues 178–201 (SYDLGERKPSSAAYQKAPTKEFYA) form a disordered region. A Phosphoserine modification is found at Ser-187.

Belongs to the syndecan proteoglycan family. Interacts (via cytoplasmic domain) with SARM1. Forms a complex with SDCBP and PDCD6IP. In terms of processing, O-glycosylated; contains both heparan sulfate and chondroitin sulfate.

It is found in the membrane. Cell surface proteoglycan which regulates dendritic arbor morphogenesis. This is Syndecan-2 (Sdc2) from Rattus norvegicus (Rat).